We begin with the raw amino-acid sequence, 268 residues long: Microtubule-associated protein RP/EB family member 1 (268 aa).

At A2 the chain carries N-acetylalanine. The region spanning 14-116 (NLSRHDMLAW…FVQWFKKFFD (103 aa)) is the Calponin-homology (CH) domain. Position 66 is an N6-crotonyllysine (K66). Y124 is subject to Phosphotyrosine. Positions 124-268 (YDPVAARQGQ…GGPQEEQEEY (145 aa)) are interaction with MTUS2/TIP150. Residues 147-160 (NKPKKPLSSSSAAP) are compositionally biased toward low complexity. The tract at residues 147–184 (NKPKKPLSSSSAAPQRPITTHRTTATPKAGPGVVRKNP) is disordered. S155 bears the Phosphoserine mark. A compositionally biased stretch (polar residues) spans 163–172 (PITTHRTTAT). An EB1 C-terminal domain is found at 185–255 (GVGNGDDEAA…LYATDEGFVI (71 aa)). The interaction with CDK5RAP2 stretch occupies residues 185–268 (GVGNGDDEAA…GGPQEEQEEY (84 aa)). The interval 206–211 (TVEDLE) is interaction with APC. The tract at residues 208–268 (EDLEKERDFY…GGPQEEQEEY (61 aa)) is DCTN1-binding. K220 is modified (N6-acetyllysine). The segment at 220–242 (KLRNIELICQENEGENNPVLQRI) is APC-binding. Positions 232–255 (EGENNPVLQRIVDILYATDEGFVI) are interaction with SKA1.

Belongs to the MAPRE family. In terms of assembly, homodimer. Heterodimer with MAPRE3. Interacts with DCTN1, DCTN2, TERF1 and dynein intermediate chain. Interaction with DIAPH1 and DIAPH2. Interacts (via C-terminal residues 206-211) with APC (via C-terminal residues 2674-2845); the interaction inhibits association with and bundling of F-actin. Interacts with CLASP2, DST, KIF2C and STIM1; probably required for their targeting to the growing microtubule plus ends. Interacts with MTUS2; interaction is direct and probably targets MTUS2 to microtubules. Interacts (via C-terminus) with SKA1 (via SXIP motif); the interaction is direct and stabilizes the kinetochore-microtubule attachment of the SKA1 complex. Interacts with APC2. Interacts with CLASP1. Interacts with CDK5RAP2. Interacts with MACF1. Interacts with RABL2/RABL2A; binds preferentially to GTP-bound RABL2. Interacts with KCNAB2. Interacts (via C-terminus) with CLIP1. Interacts with SLAIN2 and SLAIN1. Interacts with KIF18B; this interaction is required for efficient accumulation of KIF18B at microtubule plus ends. Interacts with MISP. Interacts with KNSTRN. Interacts with NCKAP5L. Interacts with CAMSAP2. Interacts with PDE4DIP isoform 13/MMG8/SMYLE; this interaction is required for its recruitment to the Golgi apparatus. Forms a pericentrosomal complex with AKAP9, CDK5RAP2 and PDE4DIP isoform 13/MMG8/SMYLE; within this complex, MAPRE1 binding to CDK5RAP2 may be mediated by PDE4DIP. Interacts with AKNA. Interacts with GAS2L1, GAS2L2, and GAS2L3. In terms of processing, acetylation at Lys-220 by KAT2B/PCAF promotes dynamic kinetochore-microtubule interactions in early mitosis. Crotonylated by KAT5 during mitosis, promoting astral microtubule plasticity and dynamic connection between astral microtubules and the cortex during mitotic chromosome segregation, thereby ensuring accurate spindle positioning in mitosis. Decrotonylated by HDAC3.

The protein localises to the cytoplasm. It localises to the cytoskeleton. It is found in the microtubule organizing center. The protein resides in the centrosome. Its subcellular location is the golgi apparatus. The protein localises to the spindle. It localises to the spindle pole. Functionally, plus-end tracking protein (+TIP) that binds to the plus-end of microtubules and regulates the dynamics of the microtubule cytoskeleton. Recruits other +TIP proteins to microtubules by binding to a conserved Ser-X-Leu-Pro (SXLP) motif in their polypeptide chains. Promotes cytoplasmic microtubule nucleation and elongation. Involved in mitotic spindle positioning by stabilizing microtubules and promoting dynamic connection between astral microtubules and the cortex during mitotic chromosome segregation. Assists chromosome alignment in metaphase by recruiting the SKA complex to the spindle and stabilizing its interactions with microtubule bundles (K-fibers). Also acts as a regulator of minus-end microtubule organization: interacts with the complex formed by AKAP9 and PDE4DIP, leading to recruit CAMSAP2 to the Golgi apparatus, thereby tethering non-centrosomal minus-end microtubules to the Golgi, an important step for polarized cell movement. Promotes elongation of CAMSAP2-decorated microtubule stretches on the minus-end of microtubules. Acts as a regulator of autophagosome transport via interaction with CAMSAP2. Functions downstream of Rho GTPases and DIAPH1 in stable microtubule formation. May play a role in cell migration. This chain is Microtubule-associated protein RP/EB family member 1 (MAPRE1), found in Bos taurus (Bovine).